A 637-amino-acid polypeptide reads, in one-letter code: Chaperone protein HtpG (637 aa).

The tract at residues 1 to 345 (MSQQETHGFQ…SNDLPLNVSR (345 aa)) is a; substrate-binding. Residues 346–562 (EILQDNHITK…EGEMSTQMIK (217 aa)) form a b region. The interval 563-637 (LMQAAGQPVP…MNQMLLANMK (75 aa)) is c.

Belongs to the heat shock protein 90 family. In terms of assembly, homodimer.

It localises to the cytoplasm. Its function is as follows. Molecular chaperone. Has ATPase activity. This Shewanella sp. (strain W3-18-1) protein is Chaperone protein HtpG.